A 218-amino-acid polypeptide reads, in one-letter code: Ribosomal RNA small subunit methyltransferase J (218 aa).

S-adenosyl-L-methionine-binding positions include 55 to 56 (RD), 71 to 72 (ER), and aspartate 123.

The protein belongs to the methyltransferase superfamily. RsmJ family.

It is found in the cytoplasm. It carries out the reaction guanosine(1516) in 16S rRNA + S-adenosyl-L-methionine = N(2)-methylguanosine(1516) in 16S rRNA + S-adenosyl-L-homocysteine + H(+). In terms of biological role, specifically methylates the guanosine in position 1516 of 16S rRNA. This Rhodopseudomonas palustris (strain HaA2) protein is Ribosomal RNA small subunit methyltransferase J.